A 425-amino-acid chain; its full sequence is Enolase (425 aa).

Glutamine 162 is a (2R)-2-phosphoglycerate binding site. Glutamate 204 acts as the Proton donor in catalysis. Aspartate 241, glutamate 284, and aspartate 311 together coordinate Mg(2+). (2R)-2-phosphoglycerate contacts are provided by lysine 336, arginine 365, serine 366, and lysine 387. The active-site Proton acceptor is lysine 336.

It belongs to the enolase family. Requires Mg(2+) as cofactor.

It is found in the cytoplasm. Its subcellular location is the secreted. The protein resides in the cell surface. It carries out the reaction (2R)-2-phosphoglycerate = phosphoenolpyruvate + H2O. It participates in carbohydrate degradation; glycolysis; pyruvate from D-glyceraldehyde 3-phosphate: step 4/5. Its function is as follows. Catalyzes the reversible conversion of 2-phosphoglycerate (2-PG) into phosphoenolpyruvate (PEP). It is essential for the degradation of carbohydrates via glycolysis. This chain is Enolase, found in Brucella anthropi (strain ATCC 49188 / DSM 6882 / CCUG 24695 / JCM 21032 / LMG 3331 / NBRC 15819 / NCTC 12168 / Alc 37) (Ochrobactrum anthropi).